The following is a 126-amino-acid chain: MTATAFVAIGGGIGAVLRFHAGRLATAIAGPNAVFPWGTFAINVVGSLLMGVLAGWLARSGGGESLRLMLGVGVLGGFTTFSAFSLETALLVQRGTIGLAALYAAGSVVAGVTGLFLGLSIMRGVA.

A run of 4 helical transmembrane segments spans residues Met1–Ala21, Ala33–Leu53, Val72–Val92, and Ile97–Leu117. 2 residues coordinate Na(+): Gly76 and Thr79.

This sequence belongs to the fluoride channel Fluc/FEX (TC 1.A.43) family.

The protein resides in the cell inner membrane. It catalyses the reaction fluoride(in) = fluoride(out). Na(+) is not transported, but it plays an essential structural role and its presence is essential for fluoride channel function. Functionally, fluoride-specific ion channel. Important for reducing fluoride concentration in the cell, thus reducing its toxicity. In Novosphingobium aromaticivorans (strain ATCC 700278 / DSM 12444 / CCUG 56034 / CIP 105152 / NBRC 16084 / F199), this protein is Fluoride-specific ion channel FluC.